Consider the following 1676-residue polypeptide: Protein TIC 214 (1676 aa).

Helical transmembrane passes span Ala-23–Pro-43, Gly-71–Ile-91, Leu-96–Phe-116, Ala-145–Met-165, Val-179–Leu-199, and Ile-226–Phe-246.

Belongs to the TIC214 family. Part of the Tic complex.

It localises to the plastid. The protein resides in the chloroplast inner membrane. Involved in protein precursor import into chloroplasts. May be part of an intermediate translocation complex acting as a protein-conducting channel at the inner envelope. The chain is Protein TIC 214 from Zygnema circumcarinatum (Green alga).